The primary structure comprises 367 residues: MSSSAPKYTTFQGSQNFRLRIVLATLSGKPIKIEKIRSGDLNPGLKDYEVSFLRLIESVTNGSVIEISYTGTTVIYRPGIIVGGASTHICPSSKPVGYFVEPMLYLAPFSKKKFSILFKGITASHNDAGIEAIKWGLMPVMEKFGVRECALHTLKRGSPPLGGGEVHLVVDSLIAQPITMHEIDRPIISSITGVAYSTRVSPSLVNRMIDGAKKVLKNLQCEVNITADVWRGENSGKSPGWGITLVAQSKQKGWSYFAEDIGDAGSIPEELGEKVACQLLEEISKSAAVGRNQLPLAIVYMVIGKEDIGRLRINKEQIDERFIILLRDIKKIFNTEVFLKPVDEADNEDMIATIKGIGFTNTSKKIA.

Position 2 is an N-acetylserine (Ser-2).

This sequence belongs to the RNA 3'-terminal cyclase family. Type 2 subfamily. As to quaternary structure, interacts directly with BMS1 and the U3 snoRNA to form a stable subcomplex. Component of the 90S small subunit processome also known as 90S pre-ribosome that consists of the 35S pre-rRNA, early-associating ribosomal proteins most of which are part of the small ribosomal subunit, the U3 snoRNA and associated proteins.

The protein localises to the nucleus. The protein resides in the nucleolus. Functionally, does not have cyclase activity. Plays a role in 40S-ribosomal-subunit biogenesis in the early pre-rRNA processing steps at sites A0, A1 and A2 that are required for proper maturation of the 18S RNA. RCL1 activates BMS1 by promoting GDP/GTP exchange. The chain is rRNA processing protein RCL1 (RCL1) from Saccharomyces cerevisiae (strain ATCC 204508 / S288c) (Baker's yeast).